Reading from the N-terminus, the 437-residue chain is Putative permease IIC component (437 aa).

A PTS EIIC type-2 domain is found at 2–437 (FDYILSLGGT…LFLRKRELSE (436 aa)). The next 12 helical transmembrane spans lie at 5 to 25 (ILSL…GLIF), 35 to 55 (AGVT…MAID), 88 to 108 (ATAI…AMLV), 134 to 154 (LMTG…ALSL), 173 to 193 (ISIP…LDAI), 215 to 235 (GMVG…GLAA), 236 to 256 (GEGF…MVLF), 302 to 322 (TIAV…ILPG), 325 to 345 (VLPL…TVIH), 354 to 374 (ISGV…APYF), 385 to 405 (FAGE…GWSI), and 410 to 430 (SLGI…VLFL).

Its subcellular location is the cell inner membrane. In terms of biological role, the phosphoenolpyruvate-dependent sugar phosphotransferase system (PTS), a major carbohydrate active -transport system, catalyzes the phosphorylation of incoming sugar substrates concomitant with their translocation across the cell membrane. In Escherichia coli (strain K12), this protein is Putative permease IIC component (sgcC).